The chain runs to 573 residues: Maestro heat-like repeat-containing protein family member 9 (573 aa).

HEAT repeat units lie at residues 118–155, 252–289, 292–328, 357–394, and 418–458; these read LYKLQILKEMLVWMSKDSSYLQERIMVIINKVLRFTVT, PLLTDFVQSLLMKLSSPDDKIASDAASILIFTLEFHAE, TMVSKIVDAIYRQLCDNNCMKDVMLQVITLLTCTSPK, SVAPHVLKTILLILKGKPGEMEDTVTEGKRFSLDITNL, and QYFP…LLNC.

The chain is Maestro heat-like repeat-containing protein family member 9 (MROH9) from Homo sapiens (Human).